A 340-amino-acid polypeptide reads, in one-letter code: HPr kinase/phosphorylase (340 aa).

Catalysis depends on residues H153 and K174. 168–175 (GNSGLGKS) serves as a coordination point for ATP. S175 contributes to the Mg(2+) binding site. D192 serves as the catalytic Proton acceptor; for phosphorylation activity. Proton donor; for dephosphorylation activity. The segment at 216 to 225 (MEIRGLGVVD) is important for the catalytic mechanism of both phosphorylation and dephosphorylation. Residue E217 coordinates Mg(2+). The active site involves R258. The segment at 279–284 (PINPGK) is important for the catalytic mechanism of dephosphorylation.

The protein belongs to the HPrK/P family. Homohexamer. The cofactor is Mg(2+).

The enzyme catalyses [HPr protein]-L-serine + ATP = [HPr protein]-O-phospho-L-serine + ADP + H(+). It carries out the reaction [HPr protein]-O-phospho-L-serine + phosphate + H(+) = [HPr protein]-L-serine + diphosphate. Catalyzes the ATP- as well as the pyrophosphate-dependent phosphorylation of a specific serine residue in HPr, a phosphocarrier protein of the phosphoenolpyruvate-dependent sugar phosphotransferase system (PTS). HprK/P also catalyzes the pyrophosphate-producing, inorganic phosphate-dependent dephosphorylation (phosphorolysis) of seryl-phosphorylated HPr (P-Ser-HPr). The chain is HPr kinase/phosphorylase from Prosthecochloris aestuarii (strain DSM 271 / SK 413).